Here is a 107-residue protein sequence, read N- to C-terminus: Thiosulfate sulfurtransferase GlpE (107 aa).

The Rhodanese domain occupies Lys16–Ala104. Cys64 acts as the Cysteine persulfide intermediate in catalysis.

This sequence belongs to the GlpE family.

Its subcellular location is the cytoplasm. It catalyses the reaction thiosulfate + hydrogen cyanide = thiocyanate + sulfite + 2 H(+). The enzyme catalyses thiosulfate + [thioredoxin]-dithiol = [thioredoxin]-disulfide + hydrogen sulfide + sulfite + 2 H(+). Its function is as follows. Transferase that catalyzes the transfer of sulfur from thiosulfate to thiophilic acceptors such as cyanide or dithiols. May function in a CysM-independent thiosulfate assimilation pathway by catalyzing the conversion of thiosulfate to sulfite, which can then be used for L-cysteine biosynthesis. The chain is Thiosulfate sulfurtransferase GlpE from Coxiella burnetii (strain CbuK_Q154) (Coxiella burnetii (strain Q154)).